The chain runs to 84 residues: Delta-conotoxin-like Bt6.4 (84 aa).

The first 22 residues, M1–A22, serve as a signal peptide directing secretion. A propeptide spanning residues D23–R57 is cleaved from the precursor. 3 disulfides stabilise this stretch: C58/C74, C65/C78, and C73/C82.

This sequence belongs to the conotoxin O1 superfamily. In terms of tissue distribution, expressed by the venom duct.

It localises to the secreted. This toxin activates voltage-gated sodium channels. It shifts the voltage-dependence of activation to more hyperpolarized potentials but has only little effect on channel inactivation. It is active on Nav1.3/SCN3A (EC(50)=3.98 nM), Nav1.4/SCN4A (EC(50)=4.99 nM), Nav1.6/SCN8A (EC(50)=1.27 nM) and Nav1.7/SCN9A (EC(50)=2.42 nM) voltage-gated sodium channels. In vivo, it induces nocifensive or pain-like behaviors in mice when injected intraplantarly. The protein is Delta-conotoxin-like Bt6.4 of Conus betulinus (Beech cone).